The sequence spans 88 residues: Small ribosomal subunit protein uS17 (88 aa).

It belongs to the universal ribosomal protein uS17 family. In terms of assembly, part of the 30S ribosomal subunit.

In terms of biological role, one of the primary rRNA binding proteins, it binds specifically to the 5'-end of 16S ribosomal RNA. The protein is Small ribosomal subunit protein uS17 of Ectopseudomonas mendocina (strain ymp) (Pseudomonas mendocina).